Here is a 159-residue protein sequence, read N- to C-terminus: 17 kDa surface antigen (159 aa).

The N-terminal stretch at 1–19 (MKLLSKIMIIALATSMLQA) is a signal peptide. A lipid anchor (N-palmitoyl cysteine) is attached at Cys-20. A lipid anchor (S-diacylglycerol cysteine) is attached at Cys-20.

The protein belongs to the rickettsiale 17 kDa surface antigen family.

Its subcellular location is the cell outer membrane. The polypeptide is 17 kDa surface antigen (omp) (Rickettsia japonica (strain ATCC VR-1363 / YH)).